The chain runs to 412 residues: Nuclear hormone receptor family member nhr-61 (412 aa).

Positions 1-19 are enriched in low complexity; it reads MIVDSISSSTASTSSSSPT. Positions 1–23 are disordered; that stretch reads MIVDSISSSTASTSSSSPTRGTP. A DNA-binding region (nuclear receptor) is located at residues 27–102; the sequence is SLQCAVCGDV…VGMNPRAVQG (76 aa). NR C4-type zinc fingers lie at residues 30 to 50 and 66 to 90; these read CAVC…CNGC and CRHG…LTRC. The 264-residue stretch at 144 to 407 folds into the NR LBD domain; the sequence is KKEQIIDNLR…DWSQELRDHR (264 aa).

It belongs to the nuclear hormone receptor family.

The protein resides in the nucleus. Its function is as follows. Orphan nuclear receptor. This is Nuclear hormone receptor family member nhr-61 (nhr-61) from Caenorhabditis elegans.